A 546-amino-acid polypeptide reads, in one-letter code: 2-isopropylmalate synthase (546 aa).

One can recognise a Pyruvate carboxyltransferase domain in the interval 5–274; it reads ITIFDTTLRD…TADVHTEHLT (270 aa). Mn(2+) contacts are provided by Asp-14, His-209, His-211, and Asn-245. The segment at 415–546 is regulatory domain; sequence RLDQFSVHLS…QNGIMHTYGE (132 aa).

This sequence belongs to the alpha-IPM synthase/homocitrate synthase family. LeuA type 1 subfamily. In terms of assembly, homodimer. Mn(2+) is required as a cofactor.

It localises to the cytoplasm. The catalysed reaction is 3-methyl-2-oxobutanoate + acetyl-CoA + H2O = (2S)-2-isopropylmalate + CoA + H(+). Its pathway is amino-acid biosynthesis; L-leucine biosynthesis; L-leucine from 3-methyl-2-oxobutanoate: step 1/4. In terms of biological role, catalyzes the condensation of the acetyl group of acetyl-CoA with 3-methyl-2-oxobutanoate (2-ketoisovalerate) to form 3-carboxy-3-hydroxy-4-methylpentanoate (2-isopropylmalate). The polypeptide is 2-isopropylmalate synthase (Salinibacter ruber (strain M8)).